The chain runs to 425 residues: WD repeat-containing protein JIP5 (425 aa).

5 WD repeats span residues 9–48 (QLDSDLFAQAIHPEEPIVAVGLASGHVQTYRLPPGASDDS), 71–110 (RHKGSCRTLAFSVDGSSLYSAGTDGIVKVADTTTGRVTAK), 117–158 (LANG…AKSA), 219–262 (ELLS…DQDE), and 321–358 (LRQEGVIGLGFDVTGRMVSGGGKKLNIWGEKTWQDVPE). Positions 354-425 (QDVPEDDEDE…HGILHFSGLA (72 aa)) are disordered. Composition is skewed to acidic residues over residues 356-368 (VPEDDEDEQEEEA) and 378-396 (SDEDEDSDEDMEESSEDDE). The segment covering 399–414 (QKRKKRRKGKGGKQAK) has biased composition (basic residues).

This sequence belongs to the WD repeat WDR55 family.

The protein localises to the nucleus. It is found in the nucleolus. This chain is WD repeat-containing protein JIP5 (JIP5), found in Phaeosphaeria nodorum (strain SN15 / ATCC MYA-4574 / FGSC 10173) (Glume blotch fungus).